A 1050-amino-acid polypeptide reads, in one-letter code: Isoleucine--tRNA ligase (1050 aa).

Residues 45-56 carry the 'HIGH' region motif; that stretch reads PYPSSPIPHIGT. The 'KMSKS' region signature appears at 594–598; the sequence is EMHKS. Lys597 lines the ATP pocket.

The protein belongs to the class-I aminoacyl-tRNA synthetase family. IleS type 2 subfamily. As to quaternary structure, monomer. Zn(2+) is required as a cofactor.

The protein localises to the cytoplasm. It carries out the reaction tRNA(Ile) + L-isoleucine + ATP = L-isoleucyl-tRNA(Ile) + AMP + diphosphate. Functionally, catalyzes the attachment of isoleucine to tRNA(Ile). As IleRS can inadvertently accommodate and process structurally similar amino acids such as valine, to avoid such errors it has two additional distinct tRNA(Ile)-dependent editing activities. One activity is designated as 'pretransfer' editing and involves the hydrolysis of activated Val-AMP. The other activity is designated 'posttransfer' editing and involves deacylation of mischarged Val-tRNA(Ile). This chain is Isoleucine--tRNA ligase, found in Sulfolobus acidocaldarius (strain ATCC 33909 / DSM 639 / JCM 8929 / NBRC 15157 / NCIMB 11770).